Here is a 1296-residue protein sequence, read N- to C-terminus: Phosphoribosylformylglycinamidine synthase (1296 aa).

Residues 304–323 (WPGAATGSGGEIRDEGATGR) are disordered. ATP is bound by residues 306 to 317 (GAATGSGGEIRD) and Ala-677. The Mg(2+) site is built by Asp-678, Glu-717, Asn-721, and Asp-885. ATP is bound at residue Ser-887. Basic and acidic residues predominate over residues 1000-1013 (PDCADQEHQAKQDE). Residues 1000–1019 (PDCADQEHQAKQDESDPGLN) are disordered. The Glutamine amidotransferase type-1 domain maps to 1043 to 1296 (VAVLREQGVN…MFRNARKQLG (254 aa)). Cys-1136 functions as the Nucleophile in the catalytic mechanism. Active-site residues include His-1261 and Glu-1263.

It in the N-terminal section; belongs to the FGAMS family. Monomer.

It is found in the cytoplasm. It catalyses the reaction N(2)-formyl-N(1)-(5-phospho-beta-D-ribosyl)glycinamide + L-glutamine + ATP + H2O = 2-formamido-N(1)-(5-O-phospho-beta-D-ribosyl)acetamidine + L-glutamate + ADP + phosphate + H(+). It participates in purine metabolism; IMP biosynthesis via de novo pathway; 5-amino-1-(5-phospho-D-ribosyl)imidazole from N(2)-formyl-N(1)-(5-phospho-D-ribosyl)glycinamide: step 1/2. Functionally, phosphoribosylformylglycinamidine synthase involved in the purines biosynthetic pathway. Catalyzes the ATP-dependent conversion of formylglycinamide ribonucleotide (FGAR) and glutamine to yield formylglycinamidine ribonucleotide (FGAM) and glutamate. In Yersinia pseudotuberculosis serotype I (strain IP32953), this protein is Phosphoribosylformylglycinamidine synthase.